A 193-amino-acid polypeptide reads, in one-letter code: Probable chorismate pyruvate-lyase (193 aa).

Residues arginine 81, leucine 119, and glutamate 177 each coordinate substrate.

The protein belongs to the UbiC family.

The protein resides in the cytoplasm. It catalyses the reaction chorismate = 4-hydroxybenzoate + pyruvate. It participates in cofactor biosynthesis; ubiquinone biosynthesis. Functionally, removes the pyruvyl group from chorismate, with concomitant aromatization of the ring, to provide 4-hydroxybenzoate (4HB) for the ubiquinone pathway. The sequence is that of Probable chorismate pyruvate-lyase from Idiomarina loihiensis (strain ATCC BAA-735 / DSM 15497 / L2-TR).